The following is a 217-amino-acid chain: ATP-dependent Clp protease proteolytic subunit (217 aa).

Ser-120 (nucleophile) is an active-site residue. His-145 is a catalytic residue.

It belongs to the peptidase S14 family. Fourteen ClpP subunits assemble into 2 heptameric rings which stack back to back to give a disk-like structure with a central cavity, resembling the structure of eukaryotic proteasomes.

The protein localises to the cytoplasm. The enzyme catalyses Hydrolysis of proteins to small peptides in the presence of ATP and magnesium. alpha-casein is the usual test substrate. In the absence of ATP, only oligopeptides shorter than five residues are hydrolyzed (such as succinyl-Leu-Tyr-|-NHMec, and Leu-Tyr-Leu-|-Tyr-Trp, in which cleavage of the -Tyr-|-Leu- and -Tyr-|-Trp bonds also occurs).. In terms of biological role, cleaves peptides in various proteins in a process that requires ATP hydrolysis. Has a chymotrypsin-like activity. Plays a major role in the degradation of misfolded proteins. In Ralstonia nicotianae (strain ATCC BAA-1114 / GMI1000) (Ralstonia solanacearum), this protein is ATP-dependent Clp protease proteolytic subunit.